Here is a 233-residue protein sequence, read N- to C-terminus: LexA repressor (233 aa).

Residues Phe26–Thr46 constitute a DNA-binding region (H-T-H motif). Catalysis depends on for autocatalytic cleavage activity residues Ser154 and Lys192.

The protein belongs to the peptidase S24 family. In terms of assembly, homodimer.

The catalysed reaction is Hydrolysis of Ala-|-Gly bond in repressor LexA.. Functionally, represses a number of genes involved in the response to DNA damage (SOS response), including recA and lexA. In the presence of single-stranded DNA, RecA interacts with LexA causing an autocatalytic cleavage which disrupts the DNA-binding part of LexA, leading to derepression of the SOS regulon and eventually DNA repair. In Roseobacter denitrificans (strain ATCC 33942 / OCh 114) (Erythrobacter sp. (strain OCh 114)), this protein is LexA repressor.